Consider the following 419-residue polypeptide: BTB/POZ domain-containing protein KCTD20 (419 aa).

The BTB domain maps to 117–191; the sequence is EKVTLLVDGT…YKTGIINCPD (75 aa).

In terms of assembly, interacts with AKT1; AKT2 and AKT3. Associates with PP2CA. Part of a complex containing MARK4.

It localises to the cytoplasm. In terms of biological role, promotes the phosphorylation of AKT family members. The polypeptide is BTB/POZ domain-containing protein KCTD20 (KCTD20) (Homo sapiens (Human)).